A 324-amino-acid chain; its full sequence is Zinc metalloproteinase leucurolysin-B (324 aa).

Residues 1–119 (DTVLLNRISH…LNPQCILNEP (119 aa)) enclose the Peptidase M12B domain. Ca(2+) is bound at residue Asp11. Intrachain disulfides connect Cys34/Cys114, Cys74/Cys98, and Cys76/Cys81. Position 59 (His59) interacts with Zn(2+). Glu60 is a catalytic residue. Residues His63 and His69 each contribute to the Zn(2+) site. An N-linked (GlcNAc...) asparagine glycan is attached at Asn97. 8 residues coordinate Ca(2+): Cys114, Asn117, Val129, Asn132, Leu134, Glu136, Glu139, and Asp142. In terms of domain architecture, Disintegrin spans 127-213 (PPVCGNELLE…QCPTDDFKRN (87 aa)). Cystine bridges form between Cys130–Cys159, Cys141–Cys154, Cys143–Cys149, Cys153–Cys176, Cys167–Cys173, Cys172–Cys198, Cys185–Cys205, Cys192–Cys224, Cys217–Cys229, Cys236–Cys286, Cys251–Cys295, Cys264–Cys274, and Cys281–Cys315. Positions 191–193 (ECD) match the D/ECD-tripeptide motif. N-linked (GlcNAc...) asparagine glycans are attached at residues Asn296 and Asn305.

This sequence belongs to the venom metalloproteinase (M12B) family. P-III subfamily. P-IIIa sub-subfamily. Monomer. Zn(2+) is required as a cofactor. N-glycosylated. Post-translationally, the N-terminus is blocked. As to expression, expressed by the venom gland.

It localises to the secreted. Its activity is regulated as follows. Inhibited by EDTA, but not by PMSF. Pre-incubation with 2 mM DTT completely abolishes activity. Its function is as follows. Snake venom zinc metalloproteinase that acts as a potent hemorrhagic toxin. Hydrolyzes the insulin B chain at the 14-Ala-|-Leu-15 bond but not the 16-Tyr-|-Leu-17 bond. Degrades the alpha-chain of fibrin and hydrolyzes the Aalpha-chain of fibrinogen (FGA) while leaving the beta and gamma chains unaffected. Degrades type-I collagen and its gelatin. Degrades the alpha-1 chain of type-IV collagen and its gelatin but not the alpha-2 chain. Degrades plasma fibronectin, plasma vitronectin and basement membrane enactin. It inhibits collagen-induced platelet aggregation. The protein is Zinc metalloproteinase leucurolysin-B of Bothrops leucurus (Whitetail lancehead).